Here is a 1043-residue protein sequence, read N- to C-terminus: Sarcoplasmic/endoplasmic reticulum calcium ATPase 2 (1043 aa).

Over 1-48 the chain is Cytoplasmic; the sequence is MENAHTKTVEEVLGHFGVNESTGLSLEQVKKLKERWGSNELPAEEGKT. Position 38 is a phosphoserine (serine 38). The helical transmembrane segment at 49-69 threads the bilayer; sequence LLELVIEQFEDLLVRILLLAA. At 70–89 the chain is on the lumenal side; it reads CISFVLAWFEEGEETITAFV. Residues 90-110 traverse the membrane as a helical segment; that stretch reads EPFVILLILVANAIVGVWQER. The Cytoplasmic segment spans residues 111–253; sequence NAENAIEALK…QERTPLQQKL (143 aa). A helical membrane pass occupies residues 254–273; the sequence is DEFGEQLSKVISLICIAVWI. Residues 274 to 295 lie on the Lumenal side of the membrane; sequence INIGHFNDPVHGGSWIRGAIYY. 2 positions are modified to 3'-nitrotyrosine: tyrosine 294 and tyrosine 295. A helical membrane pass occupies residues 296-313; sequence FKIAVALAVAAIPEGLPA. Residues valine 304, alanine 305, isoleucine 307, and glutamate 309 each coordinate Ca(2+). The Cytoplasmic segment spans residues 314–756; that stretch reads VITTCLALGT…EEGRAIYNNM (443 aa). Catalysis depends on aspartate 351, which acts as the 4-aspartylphosphate intermediate. Residues aspartate 351 and threonine 353 each contribute to the Mg(2+) site. Threonine 353 contacts ATP. Position 441 is a phosphothreonine (threonine 441). ATP is bound by residues glutamate 442, arginine 489, and lysine 514. Phosphoserine is present on serine 531. Arginine 559 is an ATP binding site. Positions 575–594 are interaction with HAX1; that stretch reads MHLEDSANFIKYETNLTFVG. Serine 580 carries the phosphoserine modification. Threonine 624, glycine 625, and aspartate 626 together coordinate ATP. Serine 661 and serine 663 each carry phosphoserine. Residues arginine 677 and lysine 683 each coordinate ATP. Position 702 (aspartate 702) interacts with Mg(2+). Residue asparagine 705 participates in ATP binding. The chain crosses the membrane as a helical span at residues 757–776; sequence KQFIRYLISSNVGEVVCIFL. Ca(2+)-binding residues include asparagine 767 and glutamate 770. At 777-786 the chain is on the lumenal side; the sequence is TAALGFPEAL. Residues 787–807 form a helical membrane-spanning segment; sequence IPVQLLWVNLVTDGLPATALG. The interval 787–807 is interaction with PLN; that stretch reads IPVQLLWVNLVTDGLPATALG. Residues 788–1043 form an interaction with TMEM64 and PDIA3 region; sequence PVQLLWVNLV…DTNFSDMFWS (256 aa). Ca(2+)-binding residues include asparagine 795, threonine 798, and aspartate 799. Topologically, residues 808–827 are cytoplasmic; it reads FNPPDLDIMNKPPRNPKEPL. Residues 828 to 850 traverse the membrane as a helical segment; it reads ISGWLFFRYLAIGCYVGAATVGA. The Lumenal segment spans residues 851-896; sequence AAWWFIAADGGPRVSFYQLSHFLQCKEDNPDFEGVDCAIFESPYPM. The cysteines at positions 875 and 887 are disulfide-linked. The chain crosses the membrane as a helical span at residues 897-916; it reads TMALSVLVTIEMCNALNSLS. Glutamate 907 contacts Ca(2+). The Cytoplasmic portion of the chain corresponds to 917–929; it reads ENQSLLRMPPWEN. The chain crosses the membrane as a helical span at residues 930–948; the sequence is IWLVGSICLSMSLHFLILY. Residues 931-942 are interaction with PLN; that stretch reads WLVGSICLSMSL. The Lumenal segment spans residues 949-963; the sequence is VEPLPLIFQITPLNL. A helical membrane pass occupies residues 964-984; that stretch reads TQWLMVLKISLPVILMDETLK. Residues 985–1043 lie on the Cytoplasmic side of the membrane; sequence FVARNYLEPGKECAQPATKPSCSLSACTDGISWPFVLLIMPLVVWVYSTDTNFSDMFWS.

The protein belongs to the cation transport ATPase (P-type) (TC 3.A.3) family. Type IIA subfamily. As to quaternary structure, interacts with sarcolipin (SLN); the interaction inhibits ATP2A2 Ca(2+) affinity. Interacts with phospholamban (PLN); the interaction inhibits ATP2A2 Ca(2+) affinity. Interacts with myoregulin (MRLN). Interacts with ARLN and ERLN; the interactions inhibit ATP2A2 Ca(2+) affinity. Interacts with STRIT1/DWORF; the interaction results in activation of ATP2A2. Interacts with the monomeric forms of SLN, PLN, ARLN, ERLN and STRI1/DWORF. Interacts with HAX1. Interacts with S100A8 and S100A9. Interacts with SLC35G1 and STIM1. Interacts with TMEM203. Interacts with TMEM64 and PDIA3. Interacts with TMX1. Interacts with TMX2. Interacts with VMP1; VMP1 competes with PLN and SLN to prevent them from forming an inhibitory complex with ATP2A2. Interacts with ULK1. Interacts with S100A1 in a Ca(2+)-dependent manner. Interacts with TUNAR. Interacts with FLVCR2; this interaction occurs in the absence of heme and promotes ATP2A2 proteasomal degradation; this complex is dissociated upon heme binding. Interacts with FNIP1. In terms of assembly, interacts with TRAM2 (via C-terminus). It depends on Mg(2+) as a cofactor. Post-translationally, nitrated under oxidative stress. Nitration on the two tyrosine residues inhibits catalytic activity. Serotonylated on Gln residues by TGM2 in response to hypoxia, leading to its inactivation. In terms of tissue distribution, isoform 2 is highly expressed in heart and slow twitch skeletal muscle. Isoform 1 is widely expressed.

The protein resides in the endoplasmic reticulum membrane. Its subcellular location is the sarcoplasmic reticulum membrane. It carries out the reaction Ca(2+)(in) + ATP + H2O = Ca(2+)(out) + ADP + phosphate + H(+). With respect to regulation, has different conformational states with differential Ca2+ affinity. The E1 conformational state (active form) shows high Ca(2+) affinity, while the E2 state exhibits low Ca(2+) affinity. Binding of ATP allosterically increases its affinity for subsequent binding of Ca2+. Reversibly inhibited by phospholamban (PLN) at low calcium concentrations. PLN inhibits ATP2A2 Ca(2+) affinity by disrupting its allosteric activation by ATP. Inhibited by sarcolipin (SLN) and myoregulin (MRLN). The inhibition is blocked by VMP1. Enhanced by STRIT1/DWORF; STRIT1 increases activity by displacing sarcolipin (SLN), phospholamban (PLN) and myoregulin (MRLN). Stabilizes SERCA2 in its E2 state. In terms of biological role, this magnesium-dependent enzyme catalyzes the hydrolysis of ATP coupled with the translocation of calcium from the cytosol to the sarcoplasmic reticulum lumen. Involved in autophagy in response to starvation. Upon interaction with VMP1 and activation, controls ER-isolation membrane contacts for autophagosome formation. Also modulates ER contacts with lipid droplets, mitochondria and endosomes. In coordination with FLVCR2 mediates heme-stimulated switching from mitochondrial ATP synthesis to thermogenesis. Its function is as follows. Involved in the regulation of the contraction/relaxation cycle. Acts as a regulator of TNFSF11-mediated Ca(2+) signaling pathways via its interaction with TMEM64 which is critical for the TNFSF11-induced CREB1 activation and mitochondrial ROS generation necessary for proper osteoclast generation. Association between TMEM64 and SERCA2 in the ER leads to cytosolic Ca(2+) spiking for activation of NFATC1 and production of mitochondrial ROS, thereby triggering Ca(2+) signaling cascades that promote osteoclast differentiation and activation. The chain is Sarcoplasmic/endoplasmic reticulum calcium ATPase 2 (Atp2a2) from Rattus norvegicus (Rat).